The sequence spans 367 residues: Secondary metabolism regulator laeA (367 aa).

Positions 1 to 82 are disordered; sequence MFGQQQQQQP…PETYPGHEEN (82 aa). The span at 19 to 41 shows a compositional bias: polar residues; sequence LNHNSRWTPPNESAQPRRSSNAM. 2 stretches are compositionally biased toward basic and acidic residues: residues 47–56 and 71–82; these read TDRDPAEGHP and KSPETYPGHEEN.

This sequence belongs to the methyltransferase superfamily. LaeA methyltransferase family. As to quaternary structure, component of the heterotrimeric velvet complex composed of laeA, veA and velB; VeA acting as a bridging protein between laeA and velB.

Its subcellular location is the nucleus. The enzyme catalyses L-methionyl-[protein] + S-adenosyl-L-methionine = S-methyl-L-methionyl-[protein] + S-adenosyl-L-homocysteine. Functionally, methyltransferase that performs automethylation. No other methyl-accepting substrate has been identified yet. Component of the velvet transcription factor complex that acts as a global regulator for secondary metabolite gene expression. Controls the expression of the monacolin K gene clusters. Also regulates pigmentation. This Monascus pilosus (Red mold) protein is Secondary metabolism regulator laeA.